The following is a 990-amino-acid chain: Activator of stress genes protein 1 (990 aa).

The interval 1 to 88 (MPKREIEDTQ…NKPKSQENKR (88 aa)) is disordered. Residues 9 to 23 (TQSPYSSTGLVSTGE) show a composition bias toward polar residues. Residues 24-61 (SPKTSTSTPTSSTNNRAATTTTNNTSTTSTSLLKSNSN) are compositionally biased toward low complexity. Residues 95 to 121 (CDTCRQKKVKCDGKQPCIHCTVYSYKC) constitute a DNA-binding region (zn(2)-C6 fungal-type). Composition is skewed to low complexity over residues 160–179 (NNNSSNQQSLQSLQQQQQHV), 282–293 (SFDDSSNSAVSS), and 773–793 (TATTNSTTTTANTNSNSNSNS). Disordered stretches follow at residues 160–192 (NNNSSNQQSLQSLQQQQQHVVHQHQHQPLPADE), 255–295 (QDPD…SSPR), 764–800 (RTASRSRQVTATTNSTTTTANTNSNSNSNSQPTTLPA), and 915–944 (SNNNNSNNVNNNFNNNNNAGEVNNNSNGVA).

It belongs to the ASG1 family.

It localises to the nucleus. Functionally, transcription factor necessary to sustain growth on non-fermentative carbon sources such as sodium acetate, acetic acid, or ethanol. Plays a role in hyphal formation. The sequence is that of Activator of stress genes protein 1 (ASG1) from Candida albicans (strain SC5314 / ATCC MYA-2876) (Yeast).